Here is a 142-residue protein sequence, read N- to C-terminus: Large ribosomal subunit protein uL13 (142 aa).

This sequence belongs to the universal ribosomal protein uL13 family. As to quaternary structure, part of the 50S ribosomal subunit.

This protein is one of the early assembly proteins of the 50S ribosomal subunit, although it is not seen to bind rRNA by itself. It is important during the early stages of 50S assembly. This Agathobacter rectalis (strain ATCC 33656 / DSM 3377 / JCM 17463 / KCTC 5835 / VPI 0990) (Eubacterium rectale) protein is Large ribosomal subunit protein uL13.